Reading from the N-terminus, the 214-residue chain is Serine protease inhibitor 2.1 (214 aa).

It belongs to the serpin family.

The protein is Serine protease inhibitor 2.1 of Rattus norvegicus (Rat).